A 542-amino-acid polypeptide reads, in one-letter code: MAAKEVKFSVEAREKMLRGVDILANAVKVTLGPKGRNVVIDKSFGAPRITKDGVSVAKEIELEDKFENMGAQMVREVASKTSDIAGDGTTTATVLAQAIVKEGAKAVTSGMNPMDLKRGIDLAVSAIVEELKANARKISNNAEIAQVGTISANGDAEIGRFLAEAVQKVGNDGVITVEEAKTAETELEVVEGMQFDRGYLSPYFVTNADKMRVEFEDPYILIHEKKLSNLQSMLPILEAVVQSGKPLLIIAEDVEGEALATLVVNKLRGGLKIAAVKAPGFGDRRKAMLEDIAILTAGTVISEDLGIKLENVTLNMLGRAKKITVEKENTTIIDGVGSKEEISGRIAQIKAQIEETTSDYDREKLQERLAKLAGGVAVIRVGGSTEVEVKEKKDRVDDALHATRAAVEEGILPGGGVALLRAVKALDNIKTANDDQRVGVEIVRRALEAPARQIAENAGAEGSVVVGKLREKSDFSYGWNAQTGEFGDLYAQGVIDPAKVVRTALQDASSIAGLLVTTEAMIAEKPKKDAPPAMPAGAGMDF.

Residues 30-33 (TLGP), K51, 87-91 (DGTTT), G415, and D496 each bind ATP.

Belongs to the chaperonin (HSP60) family. As to quaternary structure, forms a cylinder of 14 subunits composed of two heptameric rings stacked back-to-back. Interacts with the co-chaperonin GroES.

The protein resides in the cytoplasm. It carries out the reaction ATP + H2O + a folded polypeptide = ADP + phosphate + an unfolded polypeptide.. Its function is as follows. Together with its co-chaperonin GroES, plays an essential role in assisting protein folding. The GroEL-GroES system forms a nano-cage that allows encapsulation of the non-native substrate proteins and provides a physical environment optimized to promote and accelerate protein folding. The sequence is that of Chaperonin GroEL 4 from Rhizobium etli (strain ATCC 51251 / DSM 11541 / JCM 21823 / NBRC 15573 / CFN 42).